Consider the following 266-residue polypeptide: Undecaprenyl-diphosphatase (266 aa).

The next 8 helical transmembrane spans lie at 4 to 24, 46 to 66, 82 to 102, 105 to 125, 142 to 162, 182 to 202, 216 to 236, and 244 to 264; these read WLIA…PVSS, VLIQ…RLWG, IGIL…HDFI, VLYE…FILL, YPLK…VPGV, AAEF…AYDL, LIGI…KTVL, and FAPF…LLYI.

The protein belongs to the UppP family.

The protein resides in the cell inner membrane. It catalyses the reaction di-trans,octa-cis-undecaprenyl diphosphate + H2O = di-trans,octa-cis-undecaprenyl phosphate + phosphate + H(+). Catalyzes the dephosphorylation of undecaprenyl diphosphate (UPP). Confers resistance to bacitracin. The sequence is that of Undecaprenyl-diphosphatase from Caulobacter vibrioides (strain ATCC 19089 / CIP 103742 / CB 15) (Caulobacter crescentus).